The chain runs to 236 residues: Purine nucleoside phosphorylase DeoD-type (236 aa).

A purine D-ribonucleoside is bound at residue H5. Phosphate-binding positions include G21, R25, R44, and 88-91 (RIGS). A purine D-ribonucleoside contacts are provided by residues 180 to 182 (EME) and 204 to 205 (SD). D205 (proton donor) is an active-site residue.

This sequence belongs to the PNP/UDP phosphorylase family. Homohexamer; trimer of homodimers.

It catalyses the reaction a purine D-ribonucleoside + phosphate = a purine nucleobase + alpha-D-ribose 1-phosphate. The enzyme catalyses a purine 2'-deoxy-D-ribonucleoside + phosphate = a purine nucleobase + 2-deoxy-alpha-D-ribose 1-phosphate. In terms of biological role, catalyzes the reversible phosphorolytic breakdown of the N-glycosidic bond in the beta-(deoxy)ribonucleoside molecules, with the formation of the corresponding free purine bases and pentose-1-phosphate. The polypeptide is Purine nucleoside phosphorylase DeoD-type (Hahella chejuensis (strain KCTC 2396)).